The sequence spans 99 residues: DNA-binding protein HU (99 aa).

It belongs to the bacterial histone-like protein family. In terms of assembly, homodimer.

Histone-like DNA-binding protein which is capable of wrapping DNA to stabilize it, and thus to prevent its denaturation under extreme environmental conditions. This Rickettsia typhi (strain ATCC VR-144 / Wilmington) protein is DNA-binding protein HU (hup).